A 533-amino-acid chain; its full sequence is Glucose-6-phosphate isomerase (533 aa).

E341 acts as the Proton donor in catalysis. Active-site residues include H372 and K501.

This sequence belongs to the GPI family.

Its subcellular location is the cytoplasm. The enzyme catalyses alpha-D-glucose 6-phosphate = beta-D-fructose 6-phosphate. Its pathway is carbohydrate biosynthesis; gluconeogenesis. It participates in carbohydrate degradation; glycolysis; D-glyceraldehyde 3-phosphate and glycerone phosphate from D-glucose: step 2/4. Catalyzes the reversible isomerization of glucose-6-phosphate to fructose-6-phosphate. The polypeptide is Glucose-6-phosphate isomerase (Cereibacter sphaeroides (strain ATCC 17023 / DSM 158 / JCM 6121 / CCUG 31486 / LMG 2827 / NBRC 12203 / NCIMB 8253 / ATH 2.4.1.) (Rhodobacter sphaeroides)).